We begin with the raw amino-acid sequence, 371 residues long: Cytochrome b (371 aa).

The next 4 membrane-spanning stretches (helical) occupy residues F25–I45, W69–I90, W105–L125, and F170–I190. H75 and H89 together coordinate heme b. Heme b contacts are provided by H174 and H188. Residue H193 coordinates a ubiquinone. Transmembrane regions (helical) follow at residues H218–L238, L280–H300, L312–T332, and F339–P358.

Belongs to the cytochrome b family. The cytochrome bc1 complex contains 3 respiratory subunits (MT-CYB, CYC1 and UQCRFS1), 2 core proteins (UQCRC1 and UQCRC2) and probably 6 low-molecular weight proteins. Heme b is required as a cofactor.

The protein resides in the mitochondrion inner membrane. In terms of biological role, component of the ubiquinol-cytochrome c reductase complex (complex III or cytochrome b-c1 complex) that is part of the mitochondrial respiratory chain. The b-c1 complex mediates electron transfer from ubiquinol to cytochrome c. Contributes to the generation of a proton gradient across the mitochondrial membrane that is then used for ATP synthesis. The sequence is that of Cytochrome b (MT-CYB) from Antaresia maculosa (Eastern small blotched python).